The chain runs to 156 residues: MPVLDIEDFADALPQYAAVVGLDPGEKTIGVAVSDVTRTVASPLALIEKTKFSKDAEQLFKLMDSRGAVAIVIGLPMNMDGTEGVRCQSNRALGRNLLRLKPDLPITFWDERLSTAAVTRVLIDEHDISRKRRDEVVDKMAAGWILQGALERLRGL.

The protein belongs to the YqgF nuclease family.

Its subcellular location is the cytoplasm. Functionally, could be a nuclease involved in processing of the 5'-end of pre-16S rRNA. In Caulobacter vibrioides (strain ATCC 19089 / CIP 103742 / CB 15) (Caulobacter crescentus), this protein is Putative pre-16S rRNA nuclease.